The chain runs to 265 residues: Eukaryotic translation initiation factor 3 subunit J (265 aa).

Disordered regions lie at residues 1-113 and 215-237; these read MPPS…DSDL and SNEK…AAKT. Acidic residues predominate over residues 27–45; that stretch reads DEEDGDVLDSWDAADDSEV. Residues 43–95 adopt a coiled-coil conformation; the sequence is SEVEREKAAKAAEAKAKAEAEAAANKKSKAQRIAEHKTRRKAAEDEEDDESDE. Basic and acidic residues predominate over residues 46–62; that stretch reads EREKAAKAAEAKAKAEA. The span at 86 to 97 shows a compositional bias: acidic residues; sequence EDEEDDESDEDE. 2 stretches are compositionally biased toward basic and acidic residues: residues 98 to 113 and 217 to 229; these read AEKR…DSDL and EKMK…DKGS.

This sequence belongs to the eIF-3 subunit J family. As to quaternary structure, component of the eukaryotic translation initiation factor 3 (eIF-3) complex.

It localises to the cytoplasm. Functionally, component of the eukaryotic translation initiation factor 3 (eIF-3) complex, which is involved in protein synthesis of a specialized repertoire of mRNAs and, together with other initiation factors, stimulates binding of mRNA and methionyl-tRNAi to the 40S ribosome. The eIF-3 complex specifically targets and initiates translation of a subset of mRNAs involved in cell proliferation. The chain is Eukaryotic translation initiation factor 3 subunit J (hcr1) from Emericella nidulans (strain FGSC A4 / ATCC 38163 / CBS 112.46 / NRRL 194 / M139) (Aspergillus nidulans).